The chain runs to 99 residues: NADH-quinone oxidoreductase subunit K (99 aa).

3 consecutive transmembrane segments (helical) span residues 3–23 (PANY…GVLV), 28–48 (IVVF…LVTF), and 62–82 (FFVM…ILAI).

It belongs to the complex I subunit 4L family. In terms of assembly, NDH-1 is composed of 14 different subunits. Subunits NuoA, H, J, K, L, M, N constitute the membrane sector of the complex.

Its subcellular location is the cell membrane. The enzyme catalyses a quinone + NADH + 5 H(+)(in) = a quinol + NAD(+) + 4 H(+)(out). NDH-1 shuttles electrons from NADH, via FMN and iron-sulfur (Fe-S) centers, to quinones in the respiratory chain. The immediate electron acceptor for the enzyme in this species is believed to be a menaquinone. Couples the redox reaction to proton translocation (for every two electrons transferred, four hydrogen ions are translocated across the cytoplasmic membrane), and thus conserves the redox energy in a proton gradient. This is NADH-quinone oxidoreductase subunit K from Parafrankia sp. (strain EAN1pec).